Here is a 397-residue protein sequence, read N- to C-terminus: Probable sugar efflux transporter (397 aa).

A run of 12 helical transmembrane segments spans residues 15–35, 50–70, 81–101, 103–123, 136–156, 169–189, 209–229, 246–266, 275–295, 301–321, 333–353, and 364–384; these read VVTLAIAAFIFNTTEFVPVGL, VGIMLTIYAWVVALMSLPFML, LICLFVLFIASHVLSFLAWNF, VLVISRIGIAFAHAVFWSITA, AQALSLIATGTALAMVLGLPI, TFFAIGIGALITLVCLIKLLP, PALMSIYLLTVVVVTAHYTAY, FATVLLLILGGAGIIGSVVFG, PLISIAIMLLVICLMLLLPAA, LAVLSIFWGIAIMVIGLGMQV, VAMALFSGIFNIGIGAGALVG, and TIGYVGAVPALAALVWSIIIF.

It belongs to the major facilitator superfamily. SotB (TC 2.A.1.2) family.

The protein localises to the cell inner membrane. In terms of biological role, involved in the efflux of sugars. The physiological role may be the reduction of the intracellular concentration of toxic sugars or sugar metabolites. The chain is Probable sugar efflux transporter from Citrobacter koseri (strain ATCC BAA-895 / CDC 4225-83 / SGSC4696).